The primary structure comprises 659 residues: Mitochondrial Rho GTPase 1 (659 aa).

Over 1 to 631 the chain is Cytoplasmic; sequence MTKTRIRIVV…LTNDIDYRQT (631 aa). One can recognise a Miro 1 domain in the interval 3–183; the sequence is KTRIRIVVCG…FYLCQRTITN (181 aa). GTP is bound by residues 12-19, 61-63, and 115-118; these read GDSGVGKT, DTG, and NKCD. EF-hand domains lie at 199 to 234 and 328 to 363; these read LGVL…CFSK and LGYR…TPGL. Residues Asp212, Asp214, Asp216, Glu223, Asp341, Asp343, Asp345, and Glu352 each contribute to the Ca(2+) site. In terms of domain architecture, Miro 2 spans 444-609; it reads RKVLNCYMLG…FIKLTEVALE (166 aa). GTP contacts are provided by residues 453 to 460, 489 to 493, and 558 to 561; these read GKGNSGKS, ELKGG, and LKAD. Residues 632 to 652 traverse the membrane as a helical; Anchor for type IV membrane protein segment; sequence IVAISSVVGFASLFTFTALKI. Over 653–659 the chain is Mitochondrial intermembrane; it reads YSSFKNT.

The protein belongs to the mitochondrial Rho GTPase family.

The protein resides in the mitochondrion outer membrane. Functionally, mitochondrial GTPase involved in mitochondrial trafficking. Probably involved in control of anterograde transport of mitochondria and their subcellular distribution. The polypeptide is Mitochondrial Rho GTPase 1 (GEM1) (Kluyveromyces lactis (strain ATCC 8585 / CBS 2359 / DSM 70799 / NBRC 1267 / NRRL Y-1140 / WM37) (Yeast)).